A 983-amino-acid polypeptide reads, in one-letter code: Type IV secretion system protein CagE (983 aa).

597-604 serves as a coordination point for ATP; sequence GSTGSGKT.

It belongs to the TrbE/VirB4 family. Component of the Cag type IV secretion system, which is composed of a wheel-shaped outer membrane complex (OMC) and an inner membrane complex (IMC). Interacts with CagV and CagBeta.

The protein localises to the cell inner membrane. The enzyme catalyses ATP + H2O + cellular proteinSide 1 = ADP + phosphate + cellular proteinSide 2.. Its function is as follows. ATPase component of the type IV secretion system Cag (Cag-T4SS). Acts as a molecular motor to provide the energy that is required for the export of proteins. Required for CagA translocation and induction of IL-8 in host gastric epithelial cells. Plays a key role in Cag-T4SS pilus biogenesis, especially in the localization and stabilization of the pilus-associated components CagI, CagL and the surface protein CagH. Is also critical for assembly of the entire cytoplasmic portion of the Cag inner membrane complex (IMC). This chain is Type IV secretion system protein CagE, found in Helicobacter pylori (strain ATCC 700392 / 26695) (Campylobacter pylori).